A 474-amino-acid polypeptide reads, in one-letter code: Tubulin gamma-2 chain (474 aa).

142–148 (AGGTGSG) is a GTP binding site.

Belongs to the tubulin family. Gamma-tubulin complex is composed of gamma-tubulin and GCP proteins.

It is found in the cytoplasm. Its subcellular location is the cytoskeleton. The protein localises to the microtubule organizing center. It localises to the nucleus. The protein resides in the cell cortex. Tubulin is the major constituent of microtubules. The gamma chain is found at microtubule organizing centers (MTOC) such as the spindle poles, suggesting that it is involved in the minus-end nucleation of microtubule assembly. In terms of biological role, gamma-tubulin complex is essential for the control of microtubular network remodeling in the course of initiation and development of giant-feeding cells, and for the successful reproduction of nematodes (e.g. Meloidogyne spp.) in their plant hosts. The polypeptide is Tubulin gamma-2 chain (TUBG2) (Arabidopsis thaliana (Mouse-ear cress)).